The sequence spans 369 residues: MAMHAKIPLNQPQNQDTAQLQPFPLVMSEPENGKRRLLKQLRIKRIPPLSIGDQQITFINTYGFIRANRTFTEFISELHRPGLQPIVTACMLPFGAGPLLDSPEKILEGLDLCEIKVRKSAAVKEEILFEVTALPKIFQGFQISAQPLIKVSSEKYVKAPGKINAGVEYKFYPTFVSLTYCPTTLKIQGRQTLATVRAKFMRSIHLEILLIFECKDDAPMAKALIKRDERDGYQASVWVHMCNITKSTQKFKTYDDSYFGQKVLAMKPVIGLVDMWGPTITVHISGKMPKTAAPYFNSRGRSCHPLSEVAPSIAKMAWSNGCRIHQVNAILQESDLSLIPGSDDILFRKVPVDPENINFKSTYWNPFRK.

The protein belongs to the morbillivirus/respirovirus/rubulavirus M protein family.

Its subcellular location is the virion. In terms of biological role, the M protein has a crucial role in virus assembly and interacts with the RNP complex as well as with the viral membrane. The protein is Matrix protein (M) of La Piedad-Michoacan-Mexico virus (LPMV).